A 434-amino-acid chain; its full sequence is MSFLIPNRGVGGTKIPLSIIVLVLCGFMFFILLYTERISLLSSSSSSSSSFFKLKSCPRKDVSSKPKEKIRKERSEILEVLDDRFEFDPEECNVAAGKWVYNSSIEPLYTDRSCPYIDRQFSCMKNGQPETDYLRWEWQPDDCTIPRFSPKLAMNKLRGKRLLFVGDSLQRSQWESFVCLVESIIPEGEKSMKRSQKYFVFKAKEYNATIEFYWAPYIVESNTDIPVISDPKKRIVKVDSVKDRAKFWEGADILVFNTYVWWMSGLRMKALWGSFGNGESGAEALDTQVAYRLGLKTWANWVDSTVDPNKTRVFFTTMSPTHTRSADWGKPNGTKCFNETKPIKDKKFWGTGSNKQMMKVVSSVIKHMTTHVTVINITQLSEYRIDAHTSVYTETGGKILTAEQRADPMHHADCIHWCLPGLPDTWNRILLAHL.

A helical; Signal-anchor for type II membrane protein transmembrane segment spans residues 15–35; that stretch reads IPLSIIVLVLCGFMFFILLYT. The GDS motif motif lies at 166-168; that stretch reads GDS. The DCXHWCLPGXXDXWN motif motif lies at 413–427; sequence DCIHWCLPGLPDTWN.

Belongs to the PC-esterase family. TBL subfamily.

The protein localises to the golgi apparatus membrane. Its function is as follows. Involved in secondary cell wall cellulose deposition. Required for normal stem development. May act as a bridging protein that binds pectin and other cell wall polysaccharides. Probably involved in maintaining esterification of pectins. May be involved in the specific O-acetylation of cell wall polymers. The chain is Protein trichome birefringence-like 3 (TBL3) from Arabidopsis thaliana (Mouse-ear cress).